We begin with the raw amino-acid sequence, 446 residues long: GTPase Der (446 aa).

2 consecutive EngA-type G domains span residues Pro3–Glu167 and Ile180–Thr353. GTP contacts are provided by residues Gly9–Ser16, Asp56–Phe60, Asn119–Glu122, Gly186–Ser193, Asp233–Leu237, and Asn298–Asp301. A KH-like domain is found at Lys354 to Arg438.

It belongs to the TRAFAC class TrmE-Era-EngA-EngB-Septin-like GTPase superfamily. EngA (Der) GTPase family. In terms of assembly, associates with the 50S ribosomal subunit.

In terms of biological role, GTPase that plays an essential role in the late steps of ribosome biogenesis. In Methylibium petroleiphilum (strain ATCC BAA-1232 / LMG 22953 / PM1), this protein is GTPase Der.